The primary structure comprises 991 residues: Collagenase ColT (991 aa).

Positions 1-28 are cleaved as a signal peptide; sequence MKKKFIKMLCSIAIGCMISTSYSIKVSA. Positions 29–52 are excised as a propeptide; the sequence is FSNGNTKTNPNGEFKSLSLNSTNP. The S1 metalloprotease domain, degrades FALGPA (furylacryloyl-Leu-Gly-Pro-Ala) stretch occupies residues 53–727; the sequence is YKTKYSFNDL…VYDIVFHGLL (675 aa). The tract at residues 57 to 330 is activator domain; it reads YSFNDLNKLS…AIEAIKEDFN (274 aa). The interval 340-611 is catalytic subdomain; it reads DINKLIEEGK…MENLVNNYDN (272 aa). Glu-440 provides a ligand contact to Ca(2+). Residue His-465 coordinates Zn(2+). The active site involves Glu-466. Residue His-469 coordinates Zn(2+). The Ca(2+) site is built by Gly-473, Ile-477, and Gly-479. Position 499 (Glu-499) interacts with Zn(2+). A helper subdomain region spans residues 619 to 731; sequence DDYMKQYDNK…VFHGLLSHNK (113 aa). 2 collagen-binding domain regions span residues 755-870 and 878-991; these read IYEK…NISD and IKKI…VIIN. Glu-757, Glu-759, Asn-761, Asp-784, Asp-787, Glu-883, Glu-885, Asn-887, Asp-888, Asp-910, and Asp-913 together coordinate Ca(2+).

Belongs to the peptidase M9B family. Collagenase subfamily. Ca(2+) serves as cofactor. Requires Zn(2+) as cofactor.

It localises to the secreted. It catalyses the reaction Digestion of native collagen in the triple helical region at Xaa-|-Gly bonds. With synthetic peptides, a preference is shown for Gly at P3 and P1', Pro and Ala at P2 and P2', and hydroxyproline, Ala or Arg at P3'.. Partially inhibited by 1-10-phenanthroline; inactivation is irreversible. Partially inhibited by EDTA; inactivation is reversible. Inhibited by broad-spectrum zinc metalloprotease inhibitor batimastat. N-aryl mercaptoacetamide-based inhibitors have been isolated that act on clostridial collagenases with submicromolar affinity while having negligibile activity on human collagenases. In terms of biological role, clostridial collagenases are among the most efficient degraders of eukaryotic collagen known; saprophytes use collagen as a carbon source while pathogens additionally digest collagen to aid in host colonization. Has both tripeptidylcarboxypeptidase on Gly-X-Y and endopeptidase activities; the endopeptidase cuts within the triple helix region of collagen while tripeptidylcarboxypeptidase successively digests the exposed ends, thus clostridial collagenases can digest large sections of collagen. The activator domain (residues 57-330) and catalytic subdomain (340-611) open and close around substrate allowing digestion when the protein is closed. The chain is Collagenase ColT from Clostridium tetani (strain Massachusetts / E88).